Here is a 94-residue protein sequence, read N- to C-terminus: MRLKPLGDRVVVKVIQSEEVTKGGVILPGTAKEKPQQGEVVAVGPGQYIDGKRVEPEVKVGDRVIFSKYAGTEVKLDGEEYLLLRESDILAIIE.

This sequence belongs to the GroES chaperonin family. In terms of assembly, heptamer of 7 subunits arranged in a ring. Interacts with the chaperonin GroEL.

The protein localises to the cytoplasm. Functionally, together with the chaperonin GroEL, plays an essential role in assisting protein folding. The GroEL-GroES system forms a nano-cage that allows encapsulation of the non-native substrate proteins and provides a physical environment optimized to promote and accelerate protein folding. GroES binds to the apical surface of the GroEL ring, thereby capping the opening of the GroEL channel. The sequence is that of Co-chaperonin GroES from Caldanaerobacter subterraneus subsp. tengcongensis (strain DSM 15242 / JCM 11007 / NBRC 100824 / MB4) (Thermoanaerobacter tengcongensis).